We begin with the raw amino-acid sequence, 650 residues long: Outer capsid protein VP4 (650 aa).

A lipid anchor (N-myristoyl glycine; by host) is attached at Gly2. N-linked (GlcNAc...) asparagine; by host glycans are attached at residues Asn110, Asn407, and Asn493.

This sequence belongs to the aquareoviridae outer capsid VP4 protein family. As to quaternary structure, interacts with VP6 and VP7. Post-translationally, cleaved during the endosomal proteolytic disassembly of the outer capsid. N-terminally myristoylated. This acylation is essential for the membrane fusion activity.

The protein resides in the virion. Functionally, interacts with VP7 to form the outer icosahedral capsid with an incomplete T=13 symmetry, about 80 nm in diameter, and consisting of 200 VP4-VP7 trimers. Myristoylated N-terminal peptide may be released in the endosome and involved in permeabilization and delivery of transcriptionally active viral particles into the host cell cytoplasm (Potential). In Ctenopharyngodon idella (Grass carp), this protein is Outer capsid protein VP4 (S6).